Reading from the N-terminus, the 652-residue chain is Carboxypeptidase Z (652 aa).

A signal peptide spans Met-1–Ala-18. The FZ domain maps to Asn-27 to Pro-160. Cystine bridges form between Cys-43/Cys-109, Cys-51/Cys-102, Cys-93/Cys-129, Cys-118/Cys-157, and Cys-122/Cys-146. Residues Ser-186–Val-502 form the Peptidase M14 domain. His-248 and Glu-251 together coordinate Zn(2+). Asn-281 carries an N-linked (GlcNAc...) asparagine glycan. His-380 serves as a coordination point for Zn(2+). Catalysis depends on Glu-472, which acts as the Proton donor/acceptor. Positions Leu-595 to Gly-629 are disordered.

The protein belongs to the peptidase M14 family. The cofactor is Zn(2+). As to expression, in placenta, it is present within invasive trophoblasts and in the surrounding extracellular space. Also present in amnion cells, but is not readily apparent in the extracellular matrix of this cell type. Present in normal pituitary gland and neoplastic pituitary gland (especially POMC-, GH- and PRL-producing adenomas) (at protein level). Widely expressed.

The protein resides in the secreted. It is found in the extracellular space. It localises to the extracellular matrix. Its activity is regulated as follows. Inhibited by 2-mercaptomethyl-3-guanidinoethylthiopropanoic acid (MGTA) and guanidinoethylmercaptosuccinic acid (GEMSA). Inhibited by chelating agents such as EDTA and EGTA. Its function is as follows. Cleaves substrates with C-terminal arginine residues. Probably modulates the Wnt signaling pathway, by cleaving some undefined protein. May play a role in cleavage during prohormone processing. The chain is Carboxypeptidase Z (CPZ) from Homo sapiens (Human).